Consider the following 59-residue polypeptide: Small, acid-soluble spore protein C1 (59 aa).

Belongs to the alpha/beta-type SASP family. SASP are degraded in the first minutes of spore germination and provide amino acids for both new protein synthesis and metabolism.

Functionally, SASP are bound to spore DNA. They are double-stranded DNA-binding proteins that cause DNA to change to an a-like conformation. They protect the DNA backbone from chemical and enzymatic cleavage and are thus involved in dormant spore's high resistance to UV light. In Clostridium perfringens (strain 13 / Type A), this protein is Small, acid-soluble spore protein C1 (sspC1).